Here is a 216-residue protein sequence, read N- to C-terminus: Imidazole glycerol phosphate synthase subunit HisH (216 aa).

The Glutamine amidotransferase type-1 domain occupies 2 to 216 (SIAIIDYGSG…LISNFLRWKP (215 aa)). Cys88 functions as the Nucleophile in the catalytic mechanism. Residues His196 and Glu198 contribute to the active site.

Heterodimer of HisH and HisF.

It is found in the cytoplasm. The enzyme catalyses 5-[(5-phospho-1-deoxy-D-ribulos-1-ylimino)methylamino]-1-(5-phospho-beta-D-ribosyl)imidazole-4-carboxamide + L-glutamine = D-erythro-1-(imidazol-4-yl)glycerol 3-phosphate + 5-amino-1-(5-phospho-beta-D-ribosyl)imidazole-4-carboxamide + L-glutamate + H(+). The catalysed reaction is L-glutamine + H2O = L-glutamate + NH4(+). It participates in amino-acid biosynthesis; L-histidine biosynthesis; L-histidine from 5-phospho-alpha-D-ribose 1-diphosphate: step 5/9. Functionally, IGPS catalyzes the conversion of PRFAR and glutamine to IGP, AICAR and glutamate. The HisH subunit catalyzes the hydrolysis of glutamine to glutamate and ammonia as part of the synthesis of IGP and AICAR. The resulting ammonia molecule is channeled to the active site of HisF. The polypeptide is Imidazole glycerol phosphate synthase subunit HisH (Bradyrhizobium diazoefficiens (strain JCM 10833 / BCRC 13528 / IAM 13628 / NBRC 14792 / USDA 110)).